A 402-amino-acid polypeptide reads, in one-letter code: UPF0261 protein y4oU (402 aa).

Belongs to the UPF0261 family.

This Sinorhizobium fredii (strain NBRC 101917 / NGR234) protein is UPF0261 protein y4oU.